The chain runs to 278 residues: Large ribosomal subunit protein uL2 (278 aa).

A disordered region spans residues 222–278 (GVVMNPIDHPHGGGEGRTSGGRHPVTPWGKPTKGKKTRSNKSTDKFILISRHKRKKK).

It belongs to the universal ribosomal protein uL2 family. As to quaternary structure, part of the 50S ribosomal subunit. Forms a bridge to the 30S subunit in the 70S ribosome.

Its function is as follows. One of the primary rRNA binding proteins. Required for association of the 30S and 50S subunits to form the 70S ribosome, for tRNA binding and peptide bond formation. It has been suggested to have peptidyltransferase activity; this is somewhat controversial. Makes several contacts with the 16S rRNA in the 70S ribosome. This Rhodopseudomonas palustris (strain ATCC BAA-98 / CGA009) protein is Large ribosomal subunit protein uL2.